A 153-amino-acid chain; its full sequence is NADPH-dependent 7-cyano-7-deazaguanine reductase (153 aa).

The active-site Thioimide intermediate is cysteine 51. Catalysis depends on aspartate 58, which acts as the Proton donor. Substrate is bound by residues 73-75 and 92-93; these read LES and HE.

This sequence belongs to the GTP cyclohydrolase I family. QueF type 1 subfamily.

The protein localises to the cytoplasm. It carries out the reaction 7-aminomethyl-7-carbaguanine + 2 NADP(+) = 7-cyano-7-deazaguanine + 2 NADPH + 3 H(+). The protein operates within tRNA modification; tRNA-queuosine biosynthesis. Functionally, catalyzes the NADPH-dependent reduction of 7-cyano-7-deazaguanine (preQ0) to 7-aminomethyl-7-deazaguanine (preQ1). In Bradyrhizobium diazoefficiens (strain JCM 10833 / BCRC 13528 / IAM 13628 / NBRC 14792 / USDA 110), this protein is NADPH-dependent 7-cyano-7-deazaguanine reductase.